The primary structure comprises 141 residues: Hemoglobin subunit alpha (141 aa).

The Globin domain occupies 1–141 (VLSEEDKSHV…VSAMLTSKYR (141 aa)). Histidine 58 is a binding site for O2. Residue histidine 87 participates in heme b binding.

This sequence belongs to the globin family. As to quaternary structure, heterotetramer of two alpha chains and two beta chains. As to expression, red blood cells.

In terms of biological role, involved in oxygen transport from the lung to the various peripheral tissues. The polypeptide is Hemoglobin subunit alpha (HBA) (Caiman crocodilus (Spectacled caiman)).